We begin with the raw amino-acid sequence, 432 residues long: Phosphoribosylamine--glycine ligase (432 aa).

The region spanning Arg-110–Asn-316 is the ATP-grasp domain. Residue Ile-137–Thr-194 participates in ATP binding. Mg(2+)-binding residues include Gln-274, Glu-286, and Asn-288. The Mn(2+) site is built by Gln-274, Glu-286, and Asn-288.

Belongs to the GARS family. Requires Mg(2+) as cofactor. It depends on Mn(2+) as a cofactor.

The enzyme catalyses 5-phospho-beta-D-ribosylamine + glycine + ATP = N(1)-(5-phospho-beta-D-ribosyl)glycinamide + ADP + phosphate + H(+). It participates in purine metabolism; IMP biosynthesis via de novo pathway; N(1)-(5-phospho-D-ribosyl)glycinamide from 5-phospho-alpha-D-ribose 1-diphosphate: step 2/2. The sequence is that of Phosphoribosylamine--glycine ligase from Methanococcoides burtonii (strain DSM 6242 / NBRC 107633 / OCM 468 / ACE-M).